We begin with the raw amino-acid sequence, 184 residues long: Ribosome-recycling factor (184 aa).

The protein belongs to the RRF family.

Its subcellular location is the cytoplasm. In terms of biological role, responsible for the release of ribosomes from messenger RNA at the termination of protein biosynthesis. May increase the efficiency of translation by recycling ribosomes from one round of translation to another. This is Ribosome-recycling factor from Borrelia garinii subsp. bavariensis (strain ATCC BAA-2496 / DSM 23469 / PBi) (Borreliella bavariensis).